Reading from the N-terminus, the 380-residue chain is Mitogen-activated protein kinase mpkC (380 aa).

Residues 20 to 300 (YVNLQPIGMG…AQDALRHPYL (281 aa)) enclose the Protein kinase domain. ATP is bound by residues 26-34 (IGMGSFGLV) and Lys-49. Catalysis depends on Asp-141, which acts as the Proton acceptor. Thr-171 bears the Phosphothreonine mark. The TXY motif lies at 171–173 (TGY). Position 173 is a phosphotyrosine (Tyr-173).

This sequence belongs to the protein kinase superfamily. Ser/Thr protein kinase family. MAP kinase subfamily. HOG1 sub-subfamily. It depends on Mg(2+) as a cofactor. Post-translationally, dually phosphorylated on Thr-171 and Tyr-173, which activates the enzyme.

The catalysed reaction is L-seryl-[protein] + ATP = O-phospho-L-seryl-[protein] + ADP + H(+). The enzyme catalyses L-threonyl-[protein] + ATP = O-phospho-L-threonyl-[protein] + ADP + H(+). Its activity is regulated as follows. Activated by tyrosine and threonine phosphorylation. Its function is as follows. Mitogen-activated protein kinase required for growth on media where sorbitol or mannitol is the sole carbon source. The protein is Mitogen-activated protein kinase mpkC (mpkC) of Aspergillus clavatus (strain ATCC 1007 / CBS 513.65 / DSM 816 / NCTC 3887 / NRRL 1 / QM 1276 / 107).